Here is a 387-residue protein sequence, read N- to C-terminus: Growth-regulating factor 3 (387 aa).

Residues 53–88 (PFTAAQYEELEQQALIYKYLVAGVPVPADLLLPIRR) form the QLQ domain. Short sequence motifs (bipartite nuclear localization signal) lie at residues 111-129 (KKLD…KKWR) and 147-154 (RGRNRSRK). Residues 114-158 (DPEPGRCRRTDGKKWRCSKEAAPDSKYCERHMHRGRNRSRKPVEA) form the WRC domain. Residues 145–176 (MHRGRNRSRKPVEAQLVAPHSQPPATAPAAAV) are disordered.

Belongs to the GRF family.

Its subcellular location is the nucleus. Transcription activator that plays a regulatory role in gibberellin-induced stem elongation. This is Growth-regulating factor 3 (GRF3) from Oryza sativa subsp. japonica (Rice).